Consider the following 314-residue polypeptide: Methionyl-tRNA formyltransferase (314 aa).

112-115 (SLLP) contributes to the (6S)-5,6,7,8-tetrahydrofolate binding site.

It belongs to the Fmt family.

The catalysed reaction is L-methionyl-tRNA(fMet) + (6R)-10-formyltetrahydrofolate = N-formyl-L-methionyl-tRNA(fMet) + (6S)-5,6,7,8-tetrahydrofolate + H(+). Functionally, attaches a formyl group to the free amino group of methionyl-tRNA(fMet). The formyl group appears to play a dual role in the initiator identity of N-formylmethionyl-tRNA by promoting its recognition by IF2 and preventing the misappropriation of this tRNA by the elongation apparatus. The sequence is that of Methionyl-tRNA formyltransferase from Buchnera aphidicola subsp. Schizaphis graminum (strain Sg).